Consider the following 286-residue polypeptide: Energy-coupling factor transporter ATP-binding protein EcfA2 (286 aa).

In terms of domain architecture, ABC transporter spans Ile3–Glu246. Gly40–Ser47 lines the ATP pocket.

Belongs to the ABC transporter superfamily. Energy-coupling factor EcfA family. Forms a stable energy-coupling factor (ECF) transporter complex composed of 2 membrane-embedded substrate-binding proteins (S component), 2 ATP-binding proteins (A component) and 2 transmembrane proteins (T component).

The protein localises to the cell membrane. Its function is as follows. ATP-binding (A) component of a common energy-coupling factor (ECF) ABC-transporter complex. Unlike classic ABC transporters this ECF transporter provides the energy necessary to transport a number of different substrates. This is Energy-coupling factor transporter ATP-binding protein EcfA2 from Staphylococcus epidermidis (strain ATCC 12228 / FDA PCI 1200).